Reading from the N-terminus, the 335-residue chain is Succinylglutamate desuccinylase (335 aa).

Zn(2+)-binding residues include His59, Glu62, and His151. Residue Glu215 is part of the active site.

It belongs to the AspA/AstE family. Succinylglutamate desuccinylase subfamily. It depends on Zn(2+) as a cofactor.

The enzyme catalyses N-succinyl-L-glutamate + H2O = L-glutamate + succinate. The protein operates within amino-acid degradation; L-arginine degradation via AST pathway; L-glutamate and succinate from L-arginine: step 5/5. Functionally, transforms N(2)-succinylglutamate into succinate and glutamate. This Pseudomonas putida (strain ATCC 47054 / DSM 6125 / CFBP 8728 / NCIMB 11950 / KT2440) protein is Succinylglutamate desuccinylase.